Consider the following 689-residue polypeptide: MEKENHEDDGEGLPPELNQIKEQIEKERFLHIKRKFELRYIPSVATHASHHQSFDLNQPAAEDDNGGDNKSLLSRMQNPLRHFSASSDYNSYEDQGYVLDEDQDYALEEDVPLFLDEDVPLLPSVKLPIVEKLPRSITWVFTKSSQLMAESDSVIGKRQIYYLNGEALELSSEEDEEDEEEDEEEIKKEKCEFSEDVDRFIWTVGQDYGLDDLVVRRALAKYLEVDVSDILERYNELKLKNDGTAGEASDLTSKTITTAFQDFADRRHCRRCMIFDCHMHEKYEPESRSSEDKSSLFEDEDRQPCSEHCYLKVRSVTEADHVMDNDNSISNKIVVSDPNNTMWTPVEKDLYLKGIEIFGRNSCDVALNILRGLKTCLEIYNYMREQDQCTMSLDLNKTTQRHNQVTKKVSRKSSRSVRKKSRLRKYARYPPALKKTTSGEAKFYKHYTPCTCKSKCGQQCPCLTHENCCEKYCGCSKDCNNRFGGCNCAIGQCTNRQCPCFAANRECDPDLCRSCPLSCGDGTLGETPVQIQCKNMQFLLQTNKKILIGKSDVHGWGAFTWDSLKKNEYLGEYTGELITHDEANERGRIEDRIGSSYLFTLNDQLEIDARRKGNEFKFLNHSARPNCYAKLMIVRGDQRIGLFAERAIEEGEELFFDYCYGPEHADWSRGREPRKTGASKRSKEARPAR.

Disordered stretches follow at residues 1 to 20, 51 to 73, and 169 to 188; these read MEKE…LNQI, HQSF…KSLL, and ELSS…EIKK. Positions 1 to 109 are interaction with FIE; sequence MEKENHEDDG…DEDQDYALEE (109 aa). Residues 171-184 show a composition bias toward acidic residues; that stretch reads SSEEDEEDEEEDEE. One can recognise an SANT domain in the interval 339-389; the sequence is NNTMWTPVEKDLYLKGIEIFGRNSCDVALNILRGLKTCLEIYNYMREQDQC. Positions 428 to 532 constitute a CXC domain; sequence RYPPALKKTT…TLGETPVQIQ (105 aa). The SET domain maps to 544 to 659; sequence KKILIGKSDV…EGEELFFDYC (116 aa). The segment at 666 to 689 is disordered; it reads DWSRGREPRKTGASKRSKEARPAR.

It belongs to the class V-like SAM-binding methyltransferase superfamily. Histone-lysine methyltransferase family. EZ subfamily. In terms of assembly, interacts directly with FIE via its N-terminal domain. These two proteins are probably indirectly associated with FIS2. In plants, PcG complexes are probably composed of a member of the EZ family (CLF or MEA), FIE, and a member of the VEFS family (FIS2, VRN2 or EMF2). Interacts with TAF13. Expressed in unpollinated siliques that contain maturing gametophytes. Not expressed at early stages of floral development during early megagametogenesis.

Its subcellular location is the nucleus. It catalyses the reaction L-lysyl(27)-[histone H3] + 3 S-adenosyl-L-methionine = N(6),N(6),N(6)-trimethyl-L-lysyl(27)-[histone H3] + 3 S-adenosyl-L-homocysteine + 3 H(+). Its function is as follows. Polycomb group (PcG) protein. Catalytic subunit of some PcG multiprotein complex, which methylates 'Lys-27' of histone H3, leading to transcriptional repression of the affected target genes. Required to prevent the proliferation of the central cell of the female gametophyte by repressing target genes before fertilization. After fertilization, it probably also regulates the embryo and endosperm proliferation and anteroposterior organization during seed development. PcG proteins act by forming multiprotein complexes, which are required to maintain the transcriptionally repressive state of homeotic genes throughout development. PcG proteins are not required to initiate repression, but to maintain it during later stages of development. Interacts with the promoter and repress the transcription of genes such as PHE1 and PHE2, that are paternally active and maternally silenced genes. This chain is Histone-lysine N-methyltransferase MEDEA (MEA), found in Arabidopsis thaliana (Mouse-ear cress).